The primary structure comprises 82 residues: UPF0180 protein BC_1394 (82 aa).

The protein belongs to the UPF0180 family.

The chain is UPF0180 protein BC_1394 from Bacillus cereus (strain ATCC 14579 / DSM 31 / CCUG 7414 / JCM 2152 / NBRC 15305 / NCIMB 9373 / NCTC 2599 / NRRL B-3711).